The primary structure comprises 142 residues: MIYNIYIFNKDGTCIYYEDWNKKKQSQNQSEDQKLLFGMLYSLKAFITSSSPKKIDDKTGFHCYKTSTYKLHYYETLSCIKFIIMSDPNVPDLRDDLKKIYSQIFVEYVIKNPIYKHGTTVKCDTFINQLNLYLKQMPSFSS.

This sequence belongs to the TRAPP small subunits family. BET5 subfamily. As to quaternary structure, part of the multisubunit TRAPP (transport protein particle) complex.

It is found in the golgi apparatus. The protein resides in the cis-Golgi network. It localises to the endoplasmic reticulum. Its function is as follows. May play a role in vesicular transport from endoplasmic reticulum to Golgi. This Dictyostelium discoideum (Social amoeba) protein is Trafficking protein particle complex subunit 1 (trappc1-1).